The sequence spans 208 residues: Small ribosomal subunit protein uS4 (208 aa).

In terms of domain architecture, S4 RNA-binding spans 98 to 168 (RRLDNVVFRL…DSLDTVVRRG (71 aa)).

This sequence belongs to the universal ribosomal protein uS4 family. Part of the 30S ribosomal subunit. Contacts protein S5. The interaction surface between S4 and S5 is involved in control of translational fidelity.

Its function is as follows. One of the primary rRNA binding proteins, it binds directly to 16S rRNA where it nucleates assembly of the body of the 30S subunit. With S5 and S12 plays an important role in translational accuracy. This Desulforapulum autotrophicum (strain ATCC 43914 / DSM 3382 / VKM B-1955 / HRM2) (Desulfobacterium autotrophicum) protein is Small ribosomal subunit protein uS4.